We begin with the raw amino-acid sequence, 547 residues long: GMP synthase [glutamine-hydrolyzing] (547 aa).

The Glutamine amidotransferase type-1 domain occupies K12–D210. The active-site Nucleophile is the C89. Residues H184 and E186 contribute to the active site. The GMPS ATP-PPase domain maps to W211–R403. S238–S244 lines the ATP pocket.

As to quaternary structure, homodimer.

The enzyme catalyses XMP + L-glutamine + ATP + H2O = GMP + L-glutamate + AMP + diphosphate + 2 H(+). It functions in the pathway purine metabolism; GMP biosynthesis; GMP from XMP (L-Gln route): step 1/1. Its function is as follows. Catalyzes the synthesis of GMP from XMP. The sequence is that of GMP synthase [glutamine-hydrolyzing] from Ralstonia nicotianae (strain ATCC BAA-1114 / GMI1000) (Ralstonia solanacearum).